The following is a 149-amino-acid chain: Mediator of RNA polymerase II transcription subunit 9 (149 aa).

Residues 18–64 form a disordered region; sequence TNPTLDKPNAEATKEEFSSAENRDEKDYLTNQQPKNLSTPSTSSNGE. The span at 25–45 shows a compositional bias: basic and acidic residues; sequence PNAEATKEEFSSAENRDEKDY. Over residues 46–63 the composition is skewed to polar residues; sequence LTNQQPKNLSTPSTSSNG. Short sequence motifs (nuclear localization signal) lie at residues 77–99 and 136–149; these read RKDP…HRLK and KRDV…KLQR.

Belongs to the Mediator complex subunit 9 family. In terms of assembly, component of the Mediator complex, which is composed of at least 21 subunits that form three structurally distinct submodules. The Mediator head module contains MED6, MED8, MED11, SRB4/MED17, SRB5/MED18, ROX3/MED19, SRB2/MED20 and SRB6/MED22, the middle module contains MED1, MED4, NUT1/MED5, MED7, CSE2/MED9, NUT2/MED10, SRB7/MED21 and SOH1/MED31, and the tail module contains MED2, PGD1/MED3, RGR1/MED14, GAL11/MED15 and SIN4/MED16. The head and the middle modules interact directly with RNA polymerase II, whereas the elongated tail module interacts with gene-specific regulatory proteins. CSE2/MED9 interacts directly with MED4.

Its subcellular location is the nucleus. Component of the Mediator complex, a coactivator involved in the regulated transcription of nearly all RNA polymerase II-dependent genes. Mediator functions as a bridge to convey information from gene-specific regulatory proteins to the basal RNA polymerase II transcription machinery. The Mediator complex, having a compact conformation in its free form, is recruited to promoters by direct interactions with regulatory proteins and serves for the assembly of a functional preinitiation complex with RNA polymerase II and the general transcription factors. The Mediator complex unfolds to an extended conformation and partially surrounds RNA polymerase II, specifically interacting with the unphosphorylated form of the C-terminal domain (CTD) of RNA polymerase II. The Mediator complex dissociates from the RNA polymerase II holoenzyme and stays at the promoter when transcriptional elongation begins. The chain is Mediator of RNA polymerase II transcription subunit 9 (CSE2) from Saccharomyces cerevisiae (strain ATCC 204508 / S288c) (Baker's yeast).